Reading from the N-terminus, the 130-residue chain is Small ribosomal subunit protein uS9 (130 aa).

Residues 107–130 (DARMKERKKPGLKKARKASQFSKR) form a disordered region. A compositionally biased stretch (basic residues) spans 111–130 (KERKKPGLKKARKASQFSKR).

This sequence belongs to the universal ribosomal protein uS9 family.

The sequence is that of Small ribosomal subunit protein uS9 from Ligilactobacillus salivarius (strain UCC118) (Lactobacillus salivarius).